Consider the following 78-residue polypeptide: Large ribosomal subunit protein bL28 (78 aa).

Residues 1–22 form a disordered region; sequence MSKVCQVTGKRPTTGNNVSHAN. The span at 11–22 shows a compositional bias: polar residues; the sequence is RPTTGNNVSHAN.

The protein belongs to the bacterial ribosomal protein bL28 family.

The chain is Large ribosomal subunit protein bL28 from Alkalilimnicola ehrlichii (strain ATCC BAA-1101 / DSM 17681 / MLHE-1).